The primary structure comprises 357 residues: Adenylate isopentenyltransferase 1, chloroplastic (357 aa).

Residues 1-71 constitute a chloroplast transit peptide; it reads MTELNFHLLP…NRKDKVVVIL (71 aa). The span at 20-39 shows a compositional bias: low complexity; that stretch reads TTTSPSFSSHSSSSSSLLSF. Positions 20–58 are disordered; the sequence is TTTSPSFSSHSSSSSSLLSFTKRRRKHQPLVSSIRMEQS. 72 to 79 provides a ligand contact to ATP; that stretch reads GATGAGKS.

Belongs to the IPP transferase family. In terms of tissue distribution, expressed in the vascular stele of the roots, in the xylem precursor cell files in the root tip, in leaf axils, ovules, and immature seeds.

The protein localises to the plastid. It is found in the chloroplast. It carries out the reaction dimethylallyl diphosphate + AMP = N(6)-(dimethylallyl)adenosine 5'-phosphate + diphosphate. It catalyses the reaction dimethylallyl diphosphate + ADP = N(6)-(dimethylallyl)adenosine 5'-diphosphate + diphosphate. The enzyme catalyses dimethylallyl diphosphate + ATP = N(6)-(dimethylallyl)adenosine 5'-triphosphate + diphosphate. Functionally, involved in cytokinin biosynthesis. Catalyzes the transfer of an isopentenyl group from dimethylallyl diphosphate (DMAPP) to ATP, ADP and AMP. Adenine, adenosine, isopentenylpyrophosphate and 1-hydroxy-2-methyl-2-(E)-butenyl 4-diphosphate (HMBDP) are not used as substrates. The chain is Adenylate isopentenyltransferase 1, chloroplastic (IPT1) from Arabidopsis thaliana (Mouse-ear cress).